The sequence spans 260 residues: Carbonic anhydrase 3 (260 aa).

Ala-2 carries the N-acetylalanine modification. Residues 3–259 (KEWGYADHNG…IKGRIVKASF (257 aa)) form the Alpha-carbonic anhydrase domain. A phosphoserine mark is found at Ser-29, Ser-43, Ser-50, and Ser-55. The segment at 64 to 67 (KTCR) is involved in proton transfer. Position 73 is a phosphothreonine (Thr-73). The Zn(2+) site is built by His-94, His-96, and His-119. Phosphotyrosine is present on Tyr-127. An S-glutathionyl cysteine mark is found at Cys-182 and Cys-187. 198–199 (TT) is a substrate binding site. At Thr-216 the chain carries Phosphothreonine. Ser-219 is modified (phosphoserine).

It belongs to the alpha-carbonic anhydrase family. Zn(2+) is required as a cofactor. In terms of processing, S-thiolated both by thiol-disulfide exchange with glutathione disulfide and by oxyradical-initiated S-thiolation with reduced glutathione. S-glutathionylated in hepatocytes under oxidative stress.

It localises to the cytoplasm. The catalysed reaction is hydrogencarbonate + H(+) = CO2 + H2O. Inhibited by acetazolamide. Functionally, reversible hydration of carbon dioxide. This is Carbonic anhydrase 3 (CA3) from Bos taurus (Bovine).